Reading from the N-terminus, the 208-residue chain is Small ribosomal subunit protein uS3 (208 aa).

The 70-residue stretch at 17 to 86 folds into the KH type-2 domain; it reads IDEYLEKELR…NPQIEVEEIK (70 aa).

It belongs to the universal ribosomal protein uS3 family. Part of the 30S ribosomal subunit.

Functionally, binds the lower part of the 30S subunit head. The protein is Small ribosomal subunit protein uS3 of Thermococcus onnurineus (strain NA1).